The sequence spans 190 residues: DNA-invertase hin (190 aa).

Residues 2–135 (ATIGYIRVST…AGLAAARAQG (134 aa)) enclose the Resolvase/invertase-type recombinase catalytic domain. The active-site O-(5'-phospho-DNA)-serine intermediate is Ser10. A DNA-binding region (H-T-H motif) is located at residues 162 to 181 (RQQLAIIFGIGVSTLYRYFP).

Belongs to the site-specific recombinase resolvase family.

Functionally, a DNA fragment of approximately 900 base pairs, adjacent to the fljB (H2) gene, which specifies the synthesis of phase-2 flagellin, can exist in either orientation with respect to fljB. The orientation of the inversion region controls expression of fljB. The hin gene occupies about two-thirds of the inversion region; it is required for the inversion of the fljB controlling region. This Salmonella typhimurium (strain LT2 / SGSC1412 / ATCC 700720) protein is DNA-invertase hin (hin).